Consider the following 348-residue polypeptide: Protein lifeguard 1 (348 aa).

The interval 1 to 118 (MSHEKSFLVS…GNYQEEGPPS (118 aa)) is disordered. Over residues 14-41 (YPPPNPGYPVGPQAPMPPYVQPPYPGAP) the composition is skewed to pro residues. Low complexity predominate over residues 42–57 (YPQAAFQPSPYGQPGY). A compositionally biased stretch (pro residues) spans 82–101 (GPYPQSPFPPNPYGQPPPFQ). The next 7 helical transmembrane spans lie at 142–162 (VFLV…IFTF), 174–194 (VWTY…LSCC), 205–225 (LVAL…IASF), 230–250 (AVIM…IFSM), 260–280 (MGVL…CIFI), 284–304 (ILEI…LAVD), and 323–343 (FAAL…LTII).

It belongs to the BI1 family. LFG subfamily.

The protein resides in the membrane. Functionally, potential apoptotic regulator. This is Protein lifeguard 1 (Grina) from Rattus norvegicus (Rat).